Here is a 126-residue protein sequence, read N- to C-terminus: uncharacterized protein (126 aa).

Thr68 bears the Phosphothreonine mark.

This is an uncharacterized protein from Pseudomonas aeruginosa (strain UCBPP-PA14).